The sequence spans 527 residues: Baeyer-Villiger monooxygenase (527 aa).

FAD-binding positions include serine 36, glutamate 56, threonine 64–valine 67, aspartate 76, tyrosine 82, and isoleucine 125. Alanine 74–aspartate 76 is a binding site for NADP(+). Residues threonine 199–glutamine 205, arginine 222–threonine 223, and lysine 308–arginine 309 each bind NADP(+). FAD is bound at residue methionine 415.

The protein belongs to the FAD-binding monooxygenase family. The cofactor is FAD.

Catalyzes a Baeyer-Villiger oxidation reaction, i.e. the insertion of an oxygen atom into a carbon-carbon bond adjacent to a carbonyl, which converts ketones to esters or lactones using NADPH and/or NADH as an electron donor. Thus, can convert bicyclo[3.2.0]hept-2-en-6-one into the oxidative lactone products 2-oxabicyclo[3.3.0]oct-6-en-3-one and 3-oxabicyclo[3.3.0]oct-6-en-2-one. Is also able to catalyze the sulfoxidation of methyl phenyl sulfide (thioanisole). The chain is Baeyer-Villiger monooxygenase from Pseudomonas aeruginosa (strain ATCC 15692 / DSM 22644 / CIP 104116 / JCM 14847 / LMG 12228 / 1C / PRS 101 / PAO1).